A 317-amino-acid chain; its full sequence is Probable cell division protein WhiA (317 aa).

Positions 281-314 (TLKELGEMINPPIGKSGVNHRLRKLDQIADRERG) form a DNA-binding region, H-T-H motif.

This sequence belongs to the WhiA family.

In terms of biological role, involved in cell division and chromosome segregation. This Alkaliphilus metalliredigens (strain QYMF) protein is Probable cell division protein WhiA.